A 346-amino-acid polypeptide reads, in one-letter code: MTGSTHNGGSRLIQYEDSSNKEFIRKYLVETRNEFIEKQMRALYECREIYKDDIDEVINILTYALENNDSVLLRHEVAYVIGQISNEKCNDILIKLLNDTEENLMVRHEAAEGLAAIGSDSNIEVIKKFLNDEKVEVRETCELALSSLLEKNKYAVCSCSNKDSIKEAIKKKRNDEFVSKKFNTIDPVVFTSSGNAKSVDALIEDLNNEAVPLKLRYEALFKLRDMETDVSINALGEVLIKDKKSAIFRHEVAFVLGQALHLNSLKYLISSLQNVGEHEMVRHEVALALGSLGSLNINSQEYKNVQSEIISTLKTFSKDACRVVAESCLVGLDYIAENLNMAIEVN.

5 HEAT-like PBS-type repeats span residues 71–100, 104–133, 213–242, 246–275, and 279–320; these read VLLR…LNDT, LMVR…LNDE, LKLR…LIKD, AIFR…LQNV, and EMVR…SKDA. Residues histidine 75, histidine 108, and glutamate 109 each contribute to the Fe cation site. 3 residues coordinate Fe cation: histidine 250, histidine 283, and glutamate 284.

The protein belongs to the deoxyhypusine hydroxylase family. Requires Fe(2+) as cofactor.

It carries out the reaction [eIF5A protein]-deoxyhypusine + AH2 + O2 = [eIF5A protein]-hypusine + A + H2O. Its pathway is protein modification; eIF5A hypusination. Functionally, catalyzes the hydroxylation of the N(6)-(4-aminobutyl)-L-lysine intermediate produced by deoxyhypusine synthase/DHPS on a critical lysine of the eukaryotic translation initiation factor 5A/eIF-5A. This is the second step of the post-translational modification of that lysine into an unusual amino acid residue named hypusine. Hypusination is unique to mature eIF-5A factor and is essential for its function. The polypeptide is Deoxyhypusine hydroxylase (Plasmodium vivax (strain Salvador I)).